The primary structure comprises 491 residues: DEAD-box ATP-dependent RNA helicase 36 (491 aa).

The span at 1–10 shows a compositional bias: acidic residues; the sequence is MEEPTPEEEG. Residues 1 to 56 form a disordered region; sequence MEEPTPEEEGGITIMSKSRKNPKTVVNIQSQKLDSDQNTPQFEKFTNPNPSSDTTS. The span at 24 to 56 shows a compositional bias: polar residues; sequence TVVNIQSQKLDSDQNTPQFEKFTNPNPSSDTTS. The Q motif signature appears at 58-86; sequence TNFEGLGLAEWAVETCKELGMRKPTPVQT. Positions 89-262 constitute a Helicase ATP-binding domain; it reads VPKILAGRDV…EHSSNKAYFY (174 aa). Residue 102-109 coordinates ATP; it reads AQTGSGKT. The DEAD box motif lies at 210–213; that stretch reads DEAD. Residues 289-438 enclose the Helicase C-terminal domain; sequence YLVHILSQME…NKKVITDSLE (150 aa). Residues 471–491 are disordered; sequence KTLADKGLLKKRGKRQKSTEN. The segment covering 479–491 has biased composition (basic residues); the sequence is LKKRGKRQKSTEN.

The protein belongs to the DEAD box helicase family. DDX49/DBP8 subfamily.

It catalyses the reaction ATP + H2O = ADP + phosphate + H(+). The chain is DEAD-box ATP-dependent RNA helicase 36 (RH36) from Arabidopsis thaliana (Mouse-ear cress).